Here is a 204-residue protein sequence, read N- to C-terminus: High frequency lysogenization protein HflD homolog (204 aa).

This sequence belongs to the HflD family.

The protein resides in the cytoplasm. It localises to the cell inner membrane. This chain is High frequency lysogenization protein HflD homolog, found in Stenotrophomonas maltophilia (strain K279a).